Consider the following 595-residue polypeptide: UvrABC system protein C (595 aa).

Positions 14–91 (SNPGCYLHKD…IQENMPKFNI (78 aa)) constitute a GIY-YIG domain. Residues 196–231 (DKIVNQLKAKMKDMSDQMAFERAAEYRDLIEAVSTL) form the UVR domain.

Belongs to the UvrC family. Interacts with UvrB in an incision complex.

The protein resides in the cytoplasm. In terms of biological role, the UvrABC repair system catalyzes the recognition and processing of DNA lesions. UvrC both incises the 5' and 3' sides of the lesion. The N-terminal half is responsible for the 3' incision and the C-terminal half is responsible for the 5' incision. In Streptococcus thermophilus (strain ATCC BAA-491 / LMD-9), this protein is UvrABC system protein C.